Consider the following 766-residue polypeptide: Serine/threonine-protein kinase PKH1 (766 aa).

The tract at residues 1–52 (MGNRSLTEADHALLSKPLVPTSAEHTQTQEYPRPFVDGSNSQSGSELQASPQ) is disordered. Positions 38-52 (GSNSQSGSELQASPQ) are enriched in polar residues. Residues 125–391 (FKFGEQLGDG…IKQIKAHLFF (267 aa)) enclose the Protein kinase domain. ATP is bound by residues 135–137 (SYS) and Lys154. The tract at residues 156 to 201 (LSKEYLIRQKKVKYVTVEKLALQKLNGTKGIFKLFFTFQDEASLYF) is PIF-pocket. ATP is bound by residues 204-206 (EYA) and Asp210. The Proton acceptor role is filled by Asp249. The ATP site is built by Glu253 and Asp267. 2 positions are modified to phosphoserine: Ser294 and Ser296. Positions 476–495 (TSQPKLGSKSSTSVRSASNN) are enriched in polar residues. 2 disordered regions span residues 476–529 (TSQP…NRSR) and 725–745 (PEEGALHTKRPTSLQTRSSSN). Positions 511-521 (SVSSPSISTTS) are enriched in low complexity. Polar residues predominate over residues 735–745 (PTSLQTRSSSN).

The protein belongs to the protein kinase superfamily. AGC Ser/Thr protein kinase family. PDPK1 subfamily.

It carries out the reaction L-seryl-[protein] + ATP = O-phospho-L-seryl-[protein] + ADP + H(+). The enzyme catalyses L-threonyl-[protein] + ATP = O-phospho-L-threonyl-[protein] + ADP + H(+). Functionally, activates YPK1 by phosphorylating of a threonine residue. The polypeptide is Serine/threonine-protein kinase PKH1 (PKH1) (Saccharomyces cerevisiae (strain ATCC 204508 / S288c) (Baker's yeast)).